The primary structure comprises 85 residues: U4-theraphotoxin-Hhn1a (85 aa).

The N-terminal stretch at 1–22 (MKVTLIAILTCAAVLVLHTTAA) is a signal peptide. A propeptide spanning residues 23–48 (EELEAESQPMEVGMPDTELAAVDEER) is cleaved from the precursor. Disulfide bonds link Cys52/Cys66, Cys56/Cys77, and Cys71/Cys82.

Belongs to the neurotoxin 12 (Hwtx-2) family. 02 (Hwtx-2) subfamily. Monomer. Expressed by the venom gland.

The protein resides in the secreted. In terms of biological role, neurotoxin active on both insects and mammals. The protein is U4-theraphotoxin-Hhn1a of Cyriopagopus hainanus (Chinese bird spider).